Reading from the N-terminus, the 132-residue chain is Protein LEKR1 (132 aa).

Residues 37–116 (FKAMEEKVKA…KKQLSHLQDE (80 aa)) adopt a coiled-coil conformation.

The polypeptide is Protein LEKR1 (LEKR1) (Homo sapiens (Human)).